The chain runs to 189 residues: Ribonuclease HII (189 aa).

The 189-residue stretch at 1-189 (MIAGVDEAGR…PVRRALNIDC (189 aa)) folds into the RNase H type-2 domain. Asp6, Glu7, and Asp98 together coordinate a divalent metal cation.

The protein belongs to the RNase HII family. Requires Mn(2+) as cofactor. Mg(2+) is required as a cofactor.

The protein localises to the cytoplasm. It carries out the reaction Endonucleolytic cleavage to 5'-phosphomonoester.. In terms of biological role, endonuclease that specifically degrades the RNA of RNA-DNA hybrids. The protein is Ribonuclease HII of Acinetobacter baylyi (strain ATCC 33305 / BD413 / ADP1).